Consider the following 584-residue polypeptide: 65 kDa protein (584 aa).

In terms of domain architecture, Toprim spans 459-548 (YDLYIAESAI…TKKVENWLPP (90 aa)).

This Zymomonas mobilis subsp. mobilis (strain ATCC 10988 / DSM 424 / LMG 404 / NCIMB 8938 / NRRL B-806 / ZM1) protein is 65 kDa protein.